A 378-amino-acid polypeptide reads, in one-letter code: tRNA-specific 2-thiouridylase MnmA (378 aa).

Residues 9 to 16 (GVSGGVDS) and M35 contribute to the ATP site. An interaction with target base in tRNA region spans residues 94–96 (NPD). Residue C99 is the Nucleophile of the active site. A disulfide bond links C99 and C195. G123 contacts ATP. Positions 145-147 (KDQ) are interaction with tRNA. The active-site Cysteine persulfide intermediate is C195. An interaction with tRNA region spans residues 307–308 (RY).

The protein belongs to the MnmA/TRMU family.

The protein resides in the cytoplasm. The catalysed reaction is S-sulfanyl-L-cysteinyl-[protein] + uridine(34) in tRNA + AH2 + ATP = 2-thiouridine(34) in tRNA + L-cysteinyl-[protein] + A + AMP + diphosphate + H(+). Catalyzes the 2-thiolation of uridine at the wobble position (U34) of tRNA, leading to the formation of s(2)U34. The polypeptide is tRNA-specific 2-thiouridylase MnmA (Xanthomonas campestris pv. campestris (strain 8004)).